A 452-amino-acid chain; its full sequence is General transcription and DNA repair factor IIH subunit TFB2 (452 aa).

This sequence belongs to the TFB2 family. As to quaternary structure, component of the 7-subunit TFIIH core complex composed of XPB, XPD, TFB1/GTF2H1, GTF2H2/P44, TFB4/GTF2H3, TFB2/GTF2H4 and TFB5/GTF2H5, which is active in NER. The core complex associates with the 3-subunit CDK-activating kinase (CAK) module composed of CYCH1/cyclin H1, CDKD and MAT1/At4g30820 to form the 10-subunit holoenzyme (holo-TFIIH) active in transcription.

Its subcellular location is the nucleus. Component of the general transcription and DNA repair factor IIH (TFIIH) core complex, which is involved in general and transcription-coupled nucleotide excision repair (NER) of damaged DNA and, when complexed to CAK, in RNA transcription by RNA polymerase II. In NER, TFIIH acts by opening DNA around the lesion to allow the excision of the damaged oligonucleotide and its replacement by a new DNA fragment. In transcription, TFIIH has an essential role in transcription initiation. When the pre-initiation complex (PIC) has been established, TFIIH is required for promoter opening and promoter escape. Phosphorylation of the C-terminal tail (CTD) of the largest subunit of RNA polymerase II by the kinase module CAK controls the initiation of transcription. In Arabidopsis thaliana (Mouse-ear cress), this protein is General transcription and DNA repair factor IIH subunit TFB2.